Here is a 132-residue protein sequence, read N- to C-terminus: Small ribosomal subunit protein uS9 (132 aa).

Residues 103 to 132 form a disordered region; sequence NGLLTRDDRTKERKKPGLKRARKAPQYTKR. The span at 114–132 shows a compositional bias: basic residues; sequence ERKKPGLKRARKAPQYTKR.

This sequence belongs to the universal ribosomal protein uS9 family.

The sequence is that of Small ribosomal subunit protein uS9 from Dehalococcoides mccartyi (strain CBDB1).